We begin with the raw amino-acid sequence, 457 residues long: Metal tolerance protein C4 (457 aa).

The Cytoplasmic portion of the chain corresponds to 1 to 115; sequence MQSSHRILSR…IEINDQHSQR (115 aa). A helical transmembrane segment spans residues 116 to 136; it reads AVTTALWCNFLVFSLKFGVWW. Residues 137–141 are Vacuolar-facing; it reads TSSSH. A helical transmembrane segment spans residues 142–162; sequence VIMAEVVHSVADFANQALLAY. Residues 163–183 lie on the Cytoplasmic side of the membrane; sequence GLSSSRRAPDALHPYGYSKER. A helical transmembrane segment spans residues 184-204; that stretch reads FVWSLISAVGIFCLGSGATIV. Topologically, residues 205–220 are vacuolar; sequence NGVQNLWTSSPPPNME. Residues 221–241 form a helical membrane-spanning segment; that stretch reads LAAVVIGGSFLIEGASLLVAI. The Cytoplasmic segment spans residues 242-267; that stretch reads QSVKKGAAQEGMTIRDYIWRGHDPTS. The chain crosses the membrane as a helical span at residues 268-288; it reads VAVMTEDGAAVAGLAIAAASL. Topologically, residues 289 to 297 are vacuolar; that stretch reads VAVRMTGNP. Residues 298-318 form a helical membrane-spanning segment; it reads IYDPIGSIVVGNLLGMVAIFL. Topologically, residues 319-457 are cytoplasmic; sequence IQRNRHALIG…HNPTPTDPSL (139 aa).

The protein belongs to the cation diffusion facilitator (CDF) transporter (TC 2.A.4) family.

The protein resides in the vacuole membrane. Functionally, involved in sequestration of excess metal in the cytoplasm into vacuoles to maintain metal homeostasis. In Arabidopsis thaliana (Mouse-ear cress), this protein is Metal tolerance protein C4 (MTPC4).